Consider the following 590-residue polypeptide: Asparagine synthetase [glutamine-hydrolyzing] (590 aa).

Catalysis depends on Cys2, which acts as the For GATase activity. The 184-residue stretch at 2–185 (CGILAVLGCS…PGNLYSSRSG (184 aa)) folds into the Glutamine amidotransferase type-2 domain. Residues 50-54 (RLAII), 75-77 (NGE), and Asp98 contribute to the L-glutamine site. The Asparagine synthetase domain maps to 193 to 516 (PQWYNETIPS…PQNSARFTVP (324 aa)). Residues Leu231, Val267, and 341–342 (SG) contribute to the ATP site.

The catalysed reaction is L-aspartate + L-glutamine + ATP + H2O = L-asparagine + L-glutamate + AMP + diphosphate + H(+). It functions in the pathway amino-acid biosynthesis; L-asparagine biosynthesis; L-asparagine from L-aspartate (L-Gln route): step 1/1. The polypeptide is Asparagine synthetase [glutamine-hydrolyzing] (Asparagus officinalis (Garden asparagus)).